The sequence spans 559 residues: Potassium-transporting ATPase potassium-binding subunit (559 aa).

The next 12 helical transmembrane spans lie at 6–26 (FLLI…LGNV), 63–83 (LLAI…MLML), 131–151 (VGLT…IFAL), 173–193 (ITLW…IQQG), 253–273 (FVQM…FGDV), 283–303 (LLWA…WAEW), 327–347 (FGIL…CGAV), 356–376 (ALGG…FGGV), 379–399 (GLYG…LMIG), 416–436 (LTAL…ALAL), 484–504 (LLAF…MAIA), and 524–544 (GALF…LTFI).

Belongs to the KdpA family. In terms of assembly, the system is composed of three essential subunits: KdpA, KdpB and KdpC.

Its subcellular location is the cell inner membrane. Its function is as follows. Part of the high-affinity ATP-driven potassium transport (or Kdp) system, which catalyzes the hydrolysis of ATP coupled with the electrogenic transport of potassium into the cytoplasm. This subunit binds the periplasmic potassium ions and delivers the ions to the membrane domain of KdpB through an intramembrane tunnel. This is Potassium-transporting ATPase potassium-binding subunit from Enterobacter sp. (strain 638).